Consider the following 180-residue polypeptide: ATP-dependent protease subunit HslV (180 aa).

Residue Thr-8 is part of the active site. Positions 165, 168, and 171 each coordinate Na(+).

This sequence belongs to the peptidase T1B family. HslV subfamily. As to quaternary structure, a double ring-shaped homohexamer of HslV is capped on each side by a ring-shaped HslU homohexamer. The assembly of the HslU/HslV complex is dependent on binding of ATP.

The protein localises to the cytoplasm. The catalysed reaction is ATP-dependent cleavage of peptide bonds with broad specificity.. Allosterically activated by HslU binding. Functionally, protease subunit of a proteasome-like degradation complex believed to be a general protein degrading machinery. The chain is ATP-dependent protease subunit HslV from Staphylococcus epidermidis (strain ATCC 12228 / FDA PCI 1200).